The following is a 364-amino-acid chain: Capsular polysaccharide phosphotransferase cps1A (364 aa).

Belongs to the stealth family.

In terms of biological role, part of a capsular polysaccharide synthesis locus. This Actinobacillus pleuropneumoniae (Haemophilus pleuropneumoniae) protein is Capsular polysaccharide phosphotransferase cps1A (cps1A).